Reading from the N-terminus, the 94-residue chain is Non-specific lipid-transfer protein 1 (94 aa).

Disulfide bonds link cysteine 4–cysteine 53, cysteine 14–cysteine 30, cysteine 31–cysteine 76, and cysteine 51–cysteine 90.

Plant non-specific lipid-transfer proteins transfer phospholipids as well as galactolipids across membranes. May play a role in wax or cutin deposition in the cell walls of expanding epidermal cells and certain secretory tissues. In Amaranthus hypochondriacus (Prince-of-Wales feather), this protein is Non-specific lipid-transfer protein 1.